Consider the following 331-residue polypeptide: N-arachidonyl glycine receptor (331 aa).

Topologically, residues 1–26 are extracellular; that stretch reads MITLNNQDQPVPFNNSYPDEYEIAAL. Asn14 carries N-linked (GlcNAc...) asparagine glycosylation. The helical transmembrane segment at 27–47 threads the bilayer; it reads VFYSCIFIIGLFVNITALWVF. The Cytoplasmic portion of the chain corresponds to 48–56; the sequence is SCTTKKRTT. A helical transmembrane segment spans residues 57 to 77; it reads VTIYMMNVALVDLIFIMTLPF. The Extracellular portion of the chain corresponds to 78 to 95; that stretch reads RMFYYAKDEWPFGEYFCQ. The cysteines at positions 94 and 172 are disulfide-linked. A helical transmembrane segment spans residues 96-116; that stretch reads ILGALTVFYPSIALWLLAFIS. Topologically, residues 117–138 are cytoplasmic; the sequence is ADRYMAIVQPKYAKELKNTCKA. Residues 139–159 traverse the membrane as a helical segment; the sequence is VLACVGVWIMTLTTTIPLLLL. Residues 160 to 191 lie on the Extracellular side of the membrane; it reads HKDPDKDSTPATCLKISDIVYLKAVNVLNFTR. Asn188 carries N-linked (GlcNAc...) asparagine glycosylation. Residues 192–212 form a helical membrane-spanning segment; that stretch reads LTFFFLIPLFIMIGCYLVIIH. Residues 213–232 are Cytoplasmic-facing; the sequence is NLLHGRTSKLKPKVKEKSIR. Residues 233–253 traverse the membrane as a helical segment; the sequence is IIITLLVQVLVCFMPFHICFA. Topologically, residues 254-268 are extracellular; it reads FLMLGTGENSYSPWG. A helical transmembrane segment spans residues 269-289; the sequence is AFTTFLMNLSTCLDVILYYIV. The Cytoplasmic segment spans residues 290 to 331; the sequence is SKQFQARVISVMLYRNYLRGMRRKSFRSGSLRSLSNINSEML. Ser322 bears the Phosphoserine mark.

This sequence belongs to the G-protein coupled receptor 1 family.

The protein localises to the cell membrane. It localises to the cytoplasmic vesicle membrane. Functionally, g protein-coupled receptor (GPCR) that plays a role in diverse physiological processes particularly within the immune and nervous systems. Becomes active when triggered by various endogenous ligands including endocannabinoid N-arachidonyl glycine (NAGly), delta-9-tetrahydrocannabinol or resolvin D2/RvD2 derived from the omega-3 fatty acid docosahexaenoic acid (DHA). Upon RvD2 binding, facilitates the resolution of inflammation, aiding in tissue repair and homeostasis. Mechanistically, RvD2 ligation initiates Galphas protein coupling, activation of cAMP-PKA signaling pathway and phosphorylation of STAT3, leading to RvD2-stimulated macrophage phagocytosis. Mediates NAGly-induced process of reorganization of actin filaments and induction of acrosomal exocytosis. Activation by N-arachidonoyl glycine (NAGly) can also induce apoptosis in macrophages. Plays a role in homeostasis of CD8+ subsets of intraepithelial lymphocytes (IELs) (CD8alphaalpha and CD8alphabeta IELs) in small intestine by supporting preferential migration of CD8alphaalpha T-cells to intraepithelial compartment over lamina propria compartment, and by mediating their reconstitution into small intestine after bone marrow transplant. Participates also in hypotensive responses, mediating reduction in intraocular and blood pressure. This chain is N-arachidonyl glycine receptor, found in Macaca fascicularis (Crab-eating macaque).